Reading from the N-terminus, the 422-residue chain is UDP-N-acetylmuramoylalanine--D-glutamate ligase (422 aa).

102 to 108 (GTNGKTT) contributes to the ATP binding site.

It belongs to the MurCDEF family.

It is found in the cytoplasm. The catalysed reaction is UDP-N-acetyl-alpha-D-muramoyl-L-alanine + D-glutamate + ATP = UDP-N-acetyl-alpha-D-muramoyl-L-alanyl-D-glutamate + ADP + phosphate + H(+). Its pathway is cell wall biogenesis; peptidoglycan biosynthesis. In terms of biological role, cell wall formation. Catalyzes the addition of glutamate to the nucleotide precursor UDP-N-acetylmuramoyl-L-alanine (UMA). This chain is UDP-N-acetylmuramoylalanine--D-glutamate ligase, found in Helicobacter pylori (strain ATCC 700392 / 26695) (Campylobacter pylori).